The following is a 414-amino-acid chain: Esterase FrsA (414 aa).

The protein belongs to the FrsA family.

The enzyme catalyses a carboxylic ester + H2O = an alcohol + a carboxylate + H(+). Catalyzes the hydrolysis of esters. The protein is Esterase FrsA of Klebsiella pneumoniae (strain 342).